A 446-amino-acid polypeptide reads, in one-letter code: Exodeoxyribonuclease 7 large subunit (446 aa).

This sequence belongs to the XseA family. Heterooligomer composed of large and small subunits.

It is found in the cytoplasm. The catalysed reaction is Exonucleolytic cleavage in either 5'- to 3'- or 3'- to 5'-direction to yield nucleoside 5'-phosphates.. Functionally, bidirectionally degrades single-stranded DNA into large acid-insoluble oligonucleotides, which are then degraded further into small acid-soluble oligonucleotides. This Streptococcus agalactiae serotype III (strain NEM316) protein is Exodeoxyribonuclease 7 large subunit.